A 140-amino-acid polypeptide reads, in one-letter code: MPTINQLIRNGRSKIAKKSTAPAMQWGYNSLQRKQFASGGSPQKRGVCTRVYTTTPKKPNSALRKVARVRLTNTIEVSSYIPGIGHNLQEHSVVLVRGGRVKDLPGVRYHIVRGALDTQGVQKRMQARSKYGAKRPKKGK.

A 3-methylthioaspartic acid modification is found at D103. Residues 120-140 (GVQKRMQARSKYGAKRPKKGK) form a disordered region. Over residues 125–140 (MQARSKYGAKRPKKGK) the composition is skewed to basic residues.

The protein belongs to the universal ribosomal protein uS12 family. As to quaternary structure, part of the 30S ribosomal subunit. Contacts proteins S8 and S17. May interact with IF1 in the 30S initiation complex.

Functionally, with S4 and S5 plays an important role in translational accuracy. Its function is as follows. Interacts with and stabilizes bases of the 16S rRNA that are involved in tRNA selection in the A site and with the mRNA backbone. Located at the interface of the 30S and 50S subunits, it traverses the body of the 30S subunit contacting proteins on the other side and probably holding the rRNA structure together. The combined cluster of proteins S8, S12 and S17 appears to hold together the shoulder and platform of the 30S subunit. The sequence is that of Small ribosomal subunit protein uS12 from Desulfitobacterium hafniense (strain Y51).